Reading from the N-terminus, the 156-residue chain is Small ribosomal subunit protein uS7 (156 aa).

It belongs to the universal ribosomal protein uS7 family. As to quaternary structure, part of the 30S ribosomal subunit. Contacts proteins S9 and S11.

One of the primary rRNA binding proteins, it binds directly to 16S rRNA where it nucleates assembly of the head domain of the 30S subunit. Is located at the subunit interface close to the decoding center, probably blocks exit of the E-site tRNA. This chain is Small ribosomal subunit protein uS7, found in Synechococcus sp. (strain JA-3-3Ab) (Cyanobacteria bacterium Yellowstone A-Prime).